The primary structure comprises 265 residues: Anamorsin homolog (265 aa).

The segment at 1–147 (MDAAKMYGAV…WKIGSSFALK (147 aa)) is N-terminal SAM-like domain. A linker region spans residues 147 to 176 (KKVVKSSPKVQIDFDSDLIDENSLLSEEDL). Positions 186, 195, 198, and 200 each coordinate [2Fe-2S] cluster. The segment at 186–200 (CEIGPTRKACKNCSC) is fe-S binding site A. Residues Cys-226, Cys-229, Cys-237, and Cys-240 each contribute to the [4Fe-4S] cluster site. 2 consecutive short sequence motifs (cx2C motif) follow at residues 226–229 (CGSC) and 237–240 (CSTC). The interval 226–240 (CGSCGLGDAFRCSTC) is fe-S binding site B.

Belongs to the anamorsin family. As to quaternary structure, monomer. [2Fe-2S] cluster is required as a cofactor. The cofactor is [4Fe-4S] cluster.

The protein resides in the cytoplasm. Its subcellular location is the mitochondrion intermembrane space. Its function is as follows. Component of the cytosolic iron-sulfur (Fe-S) protein assembly (CIA) machinery. Required for the maturation of extramitochondrial Fe-S proteins. Part of an electron transfer chain functioning in an early step of cytosolic Fe-S biogenesis, facilitating the de novo assembly of a [4Fe-4S] cluster on the cytosolic Fe-S scaffold complex. Electrons are transferred from NADPH via a FAD- and FMN-containing diflavin oxidoreductase. Together with the diflavin oxidoreductase, also required for the assembly of the diferric tyrosyl radical cofactor of ribonucleotide reductase (RNR), probably by providing electrons for reduction during radical cofactor maturation in the catalytic small subunit. In Medicago truncatula (Barrel medic), this protein is Anamorsin homolog.